Reading from the N-terminus, the 389-residue chain is Chalcone synthase H2 (389 aa).

Cys164 is a catalytic residue.

The protein belongs to the thiolase-like superfamily. Chalcone/stilbene synthases family.

The protein resides in the cytoplasm. It catalyses the reaction (E)-4-coumaroyl-CoA + 3 malonyl-CoA + 3 H(+) = 2',4,4',6'-tetrahydroxychalcone + 3 CO2 + 4 CoA. It participates in secondary metabolite biosynthesis; flavonoid biosynthesis. In terms of biological role, involved in the biosynthesis of prenylated phenolics natural products which contribute to the bitter taste of beer and display broad biological activities. Chalcone synthase that can use 4-coumaroyl-CoA to produce 4,2',4',6'-tetrahydroxychalcone (also termed naringenin-chalcone or chalcone) which can, under specific conditions, spontaneously isomerize into naringenin. The chain is Chalcone synthase H2 from Humulus lupulus (European hop).